We begin with the raw amino-acid sequence, 453 residues long: UPF0210 protein MM_0081 (453 aa).

This sequence belongs to the UPF0210 family.

This Methanosarcina mazei (strain ATCC BAA-159 / DSM 3647 / Goe1 / Go1 / JCM 11833 / OCM 88) (Methanosarcina frisia) protein is UPF0210 protein MM_0081.